The chain runs to 208 residues: Small ribosomal subunit protein uS4 (208 aa).

The region spanning Gly-98 to Lys-158 is the S4 RNA-binding domain.

The protein belongs to the universal ribosomal protein uS4 family. As to quaternary structure, part of the 30S ribosomal subunit. Contacts protein S5. The interaction surface between S4 and S5 is involved in control of translational fidelity.

Functionally, one of the primary rRNA binding proteins, it binds directly to 16S rRNA where it nucleates assembly of the body of the 30S subunit. Its function is as follows. With S5 and S12 plays an important role in translational accuracy. This is Small ribosomal subunit protein uS4 from Actinobacillus pleuropneumoniae serotype 5b (strain L20).